The following is a 406-amino-acid chain: Pyruvate dehydrogenase E1 component subunit beta-3, chloroplastic (406 aa).

The transit peptide at 1 to 70 directs the protein to the chloroplast; that stretch reads MSAILQGAGA…PLIPNAVTTK (70 aa). A thiamine diphosphate-binding site is contributed by E142. The K(+) site is built by V195, A243, I244, and N248.

In terms of assembly, tetramer of 2 alpha and 2 beta subunits. The cofactor is thiamine diphosphate.

It is found in the plastid. Its subcellular location is the chloroplast. The enzyme catalyses N(6)-[(R)-lipoyl]-L-lysyl-[protein] + pyruvate + H(+) = N(6)-[(R)-S(8)-acetyldihydrolipoyl]-L-lysyl-[protein] + CO2. Functionally, the pyruvate dehydrogenase complex catalyzes the overall conversion of pyruvate to acetyl-CoA and CO(2). It contains multiple copies of three enzymatic components: pyruvate dehydrogenase (E1), dihydrolipoamide acetyltransferase (E2) and lipoamide dehydrogenase (E3). The protein is Pyruvate dehydrogenase E1 component subunit beta-3, chloroplastic (E1-BETA-2) of Arabidopsis thaliana (Mouse-ear cress).